Reading from the N-terminus, the 325-residue chain is DNA-directed RNA polymerase subunit alpha (325 aa).

An alpha N-terminal domain (alpha-NTD) region spans residues 1–231 (MQNSLLKPRI…DQLNVFAALE (231 aa)). Residues 246-325 (VDPILLRPVD…ENWPPAGLEK (80 aa)) form an alpha C-terminal domain (alpha-CTD) region.

This sequence belongs to the RNA polymerase alpha chain family. As to quaternary structure, homodimer. The RNAP catalytic core consists of 2 alpha, 1 beta, 1 beta' and 1 omega subunit. When a sigma factor is associated with the core the holoenzyme is formed, which can initiate transcription.

It carries out the reaction RNA(n) + a ribonucleoside 5'-triphosphate = RNA(n+1) + diphosphate. In terms of biological role, DNA-dependent RNA polymerase catalyzes the transcription of DNA into RNA using the four ribonucleoside triphosphates as substrates. This is DNA-directed RNA polymerase subunit alpha from Herminiimonas arsenicoxydans.